Here is a 988-residue protein sequence, read N- to C-terminus: Isoleucine--tRNA ligase (988 aa).

Residues Pro60 to His70 carry the 'HIGH' region motif. Residue Glu570 coordinates L-isoleucyl-5'-AMP. The short motif at Lys611 to Ser615 is the 'KMSKS' region element. Lys614 lines the ATP pocket. 4 residues coordinate Zn(2+): Cys957, Cys960, Cys977, and Cys980.

It belongs to the class-I aminoacyl-tRNA synthetase family. IleS type 1 subfamily. As to quaternary structure, monomer. Zn(2+) serves as cofactor.

It is found in the cytoplasm. The catalysed reaction is tRNA(Ile) + L-isoleucine + ATP = L-isoleucyl-tRNA(Ile) + AMP + diphosphate. Its function is as follows. Catalyzes the attachment of isoleucine to tRNA(Ile). As IleRS can inadvertently accommodate and process structurally similar amino acids such as valine, to avoid such errors it has two additional distinct tRNA(Ile)-dependent editing activities. One activity is designated as 'pretransfer' editing and involves the hydrolysis of activated Val-AMP. The other activity is designated 'posttransfer' editing and involves deacylation of mischarged Val-tRNA(Ile). The protein is Isoleucine--tRNA ligase of Synechocystis sp. (strain ATCC 27184 / PCC 6803 / Kazusa).